The primary structure comprises 664 residues: Ent-copalyl diphosphate synthase 5 (664 aa).

Lys-101 is a binding site for substrate. 2 residues coordinate Mg(2+): Asp-233 and Asp-235. The DXDD motif signature appears at Asp-233–Asp-236. Substrate is bound at residue Lys-320.

It belongs to the terpene synthase family. Tpsc subfamily. Mg(2+) is required as a cofactor. Ubiquitous expression in roots, stems, leaves and flowers.

It is found in the plastid. Its subcellular location is the chloroplast. It catalyses the reaction (2E,6E,10E)-geranylgeranyl diphosphate = ent-copalyl diphosphate. It functions in the pathway secondary metabolite biosynthesis; terpenoid biosynthesis. Functionally, involved in the biosynthesis of ent-kaurene diterpenoids natural products such as oridonin, miltiradiene, eriocalyxin B and nezukol, known to exhibit antitumor, anti-inflammatory and antibacterial activities. Catalyzes the conversion of (2E,6E,10E)-geranylgeranyl diphosphate (GGPP) to ent-copalyl diphosphate (ent-CPP). This chain is Ent-copalyl diphosphate synthase 5, found in Isodon rubescens (Rabdosia rubescens).